A 604-amino-acid chain; its full sequence is Membrane protein insertase YidC (604 aa).

Residues 8-28 (LYLAIGLSLLVLIGWNYFFAG) traverse the membrane as a helical segment. The interval 42 to 84 (EQQAQTQTTSDTTARSDLNVPGQRSLPGESPQTQLSRPEALAA) is disordered. Positions 43-58 (QQAQTQTTSDTTARSD) are enriched in low complexity. A run of 5 helical transmembrane segments spans residues 349–369 (FDLL…FWIL), 375–395 (VVGN…AVFF), 449–469 (LPML…FVTI), 507–527 (MIGH…SMFF), and 546–566 (WMPV…VIYW).

This sequence belongs to the OXA1/ALB3/YidC family. Type 1 subfamily. As to quaternary structure, interacts with the Sec translocase complex via SecD. Specifically interacts with transmembrane segments of nascent integral membrane proteins during membrane integration.

It localises to the cell inner membrane. In terms of biological role, required for the insertion and/or proper folding and/or complex formation of integral membrane proteins into the membrane. Involved in integration of membrane proteins that insert both dependently and independently of the Sec translocase complex, as well as at least some lipoproteins. Aids folding of multispanning membrane proteins. In Beijerinckia indica subsp. indica (strain ATCC 9039 / DSM 1715 / NCIMB 8712), this protein is Membrane protein insertase YidC.